The following is a 442-amino-acid chain: Serine--tRNA ligase (442 aa).

Residue T249–E251 participates in L-serine binding. Position 280–282 (R280–E282) interacts with ATP. Residue E303 participates in L-serine binding. E367 to S370 serves as a coordination point for ATP. S402 contacts L-serine.

This sequence belongs to the class-II aminoacyl-tRNA synthetase family. Type-1 seryl-tRNA synthetase subfamily. In terms of assembly, homodimer. The tRNA molecule binds across the dimer.

It localises to the cytoplasm. It carries out the reaction tRNA(Ser) + L-serine + ATP = L-seryl-tRNA(Ser) + AMP + diphosphate + H(+). It catalyses the reaction tRNA(Sec) + L-serine + ATP = L-seryl-tRNA(Sec) + AMP + diphosphate + H(+). It functions in the pathway aminoacyl-tRNA biosynthesis; selenocysteinyl-tRNA(Sec) biosynthesis; L-seryl-tRNA(Sec) from L-serine and tRNA(Sec): step 1/1. Functionally, catalyzes the attachment of serine to tRNA(Ser). Is also able to aminoacylate tRNA(Sec) with serine, to form the misacylated tRNA L-seryl-tRNA(Sec), which will be further converted into selenocysteinyl-tRNA(Sec). In Acidovorax sp. (strain JS42), this protein is Serine--tRNA ligase.